We begin with the raw amino-acid sequence, 562 residues long: Dihydroxy-acid dehydratase (562 aa).

Cysteine 51 is a binding site for [2Fe-2S] cluster. Aspartate 83 contacts Mg(2+). Cysteine 124 contacts [2Fe-2S] cluster. The Mg(2+) site is built by aspartate 125 and lysine 126. Position 126 is an N6-carboxylysine (lysine 126). Residue cysteine 196 coordinates [2Fe-2S] cluster. Glutamate 448 contacts Mg(2+). Serine 474 serves as the catalytic Proton acceptor.

The protein belongs to the IlvD/Edd family. In terms of assembly, homodimer. It depends on [2Fe-2S] cluster as a cofactor. Mg(2+) serves as cofactor.

It catalyses the reaction (2R)-2,3-dihydroxy-3-methylbutanoate = 3-methyl-2-oxobutanoate + H2O. The catalysed reaction is (2R,3R)-2,3-dihydroxy-3-methylpentanoate = (S)-3-methyl-2-oxopentanoate + H2O. It functions in the pathway amino-acid biosynthesis; L-isoleucine biosynthesis; L-isoleucine from 2-oxobutanoate: step 3/4. It participates in amino-acid biosynthesis; L-valine biosynthesis; L-valine from pyruvate: step 3/4. Functions in the biosynthesis of branched-chain amino acids. Catalyzes the dehydration of (2R,3R)-2,3-dihydroxy-3-methylpentanoate (2,3-dihydroxy-3-methylvalerate) into 2-oxo-3-methylpentanoate (2-oxo-3-methylvalerate) and of (2R)-2,3-dihydroxy-3-methylbutanoate (2,3-dihydroxyisovalerate) into 2-oxo-3-methylbutanoate (2-oxoisovalerate), the penultimate precursor to L-isoleucine and L-valine, respectively. The chain is Dihydroxy-acid dehydratase from Pyrobaculum aerophilum (strain ATCC 51768 / DSM 7523 / JCM 9630 / CIP 104966 / NBRC 100827 / IM2).